The following is a 379-amino-acid chain: ATP-sensitive inward rectifier potassium channel 10 (379 aa).

Residues 1-61 are Cytoplasmic-facing; that stretch reads MTSVAKVYYS…LKDLWTTFID (61 aa). Residue Arg-36 participates in 1,2-dioctanoyl-sn-glycero-3-phospho-(1D-myo-inositol-4,5-bisphosphate) binding. The chain crosses the membrane as a helical span at residues 62–88; it reads MQWRYKLLLFSATFAGTWFLFGVVWYL. Residues 89-114 lie on the Extracellular side of the membrane; it reads VAVAHGDLLELGPPANHTPCVVQVHT. Cys-108 and Cys-140 are joined by a disulfide. An intramembrane region (discontinuously helical; Pore-forming) is located at residues 115–131; sequence LTGAFLFSLESQTTIGY. A Selectivity filter motif is present at residues 128–133; sequence TIGYGF. Topologically, residues 132 to 140 are extracellular; the sequence is GFRYISEEC. A helical transmembrane segment spans residues 141-166; the sequence is PLAIVLLIAQLVLTTILEIFITGTFL. Residues 167 to 379 lie on the Cytoplasmic side of the membrane; sequence AKIARPKKRA…SALSVRISNV (213 aa). Residues Lys-168, Arg-171, and Lys-173 each coordinate 1,2-dioctanoyl-sn-glycero-3-phospho-(1D-myo-inositol-4,5-bisphosphate). Residue 210–217 participates in ATP binding; the sequence is GCQVTGKL.

It belongs to the inward rectifier-type potassium channel (TC 1.A.2.1) family. KCNJ10 subfamily. As to quaternary structure, homotetramer. In kidney cells, it forms heteromeric channels with Kir5.1/KCNJ16; this interaction is required for KCNJ16 localization to the basolateral membrane. Interacts with MAGI1, alone and possibly as a heteromer with KCNJ16; this interaction may facilitate KCNJ10/KCNJ16 potassium channel expression at the basolateral membrane in kidney cells. Interacts with PATJ. As to expression, widely expressed in adult brain, including in the neocortex, the stratum pyrimadale of the hippocampus and the piriform cortex. Expressed by cultured astrocytes and also by cocultured cortical neurons (at protein level). In the distal segment of the nephron, expressed in the distal convoluted tubule, the connecting tubule, and the early cortical collecting duct.

The protein resides in the membrane. It localises to the basolateral cell membrane. It carries out the reaction K(+)(in) = K(+)(out). Channel activity is strongly regulated by variations of cytosolic pH; channels are activated by alkaline and inhibited by acidic pH values. Activated by phosphatidylinositol 4,5 biphosphate (PtdIns(4,5)P2). Inhibited by Ba(2+) and Cs(+). Its function is as follows. May be responsible for potassium buffering action of glial cells in the brain. Inward rectifier potassium channels are characterized by a greater tendency to allow potassium to flow into the cell rather than out of it. Their voltage dependence is regulated by the concentration of extracellular potassium; as external potassium is raised, the voltage range of the channel opening shifts to more positive voltages. The inward rectification is mainly due to the blockage of outward current by internal magnesium. Can be blocked by extracellular barium and cesium. In the kidney, together with KCNJ16, mediates basolateral K(+) recycling in distal tubules; this process is critical for Na(+) reabsorption at the tubules. This chain is ATP-sensitive inward rectifier potassium channel 10, found in Mus musculus (Mouse).